Here is a 633-residue protein sequence, read N- to C-terminus: Probable sodium/potassium/calcium exchanger CG1090 (633 aa).

A signal peptide spans 1-21 (MWNMGLLFLIYYCVSIYSAKG). Topologically, residues 22-111 (DTKDGQVLPL…PLMNKWARQH (90 aa)) are extracellular. Residues 112–132 (GGLILHILVAVFTFFGLAIVC) traverse the membrane as a helical segment. Residues 133 to 157 (DEYFVASLDRLCEELKLSPDVAGAT) lie on the Cytoplasmic side of the membrane. One copy of the Alpha-1 repeat lies at 153–193 (VAGATFMAAGSSAPELATVVIGVFFAKDDIGISGVIGSAVF). A helical membrane pass occupies residues 158-178 (FMAAGSSAPELATVVIGVFFA). Residues 179–181 (KDD) lie on the Extracellular side of the membrane. A helical membrane pass occupies residues 182 to 202 (IGISGVIGSAVFNIMFVISVC). Topologically, residues 203-220 (ALCSGTVCQLNWWPLVRD) are cytoplasmic. Transmembrane regions (helical) follow at residues 221–241 (CFFY…DVIS) and 242–262 (CFES…LHFN). Topologically, residues 263–427 (TELERWALGL…EPRRDPLLRP (165 aa)) are extracellular. Polar residues-rich tracts occupy residues 298–310 (YTQE…QGQK), 320–333 (AKPQ…SDPN), and 395–405 (QVVSTQATSAG). The disordered stretch occupies residues 298–422 (YTQESVGQTQ…TDKQREPRRD (125 aa)). Residues 411-422 (KSTDKQREPRRD) are compositionally biased toward basic and acidic residues. Residues 428-448 (MEGGLPALVSWYVVYPIHFLC) traverse the membrane as a helical segment. Over 449–468 (KKTMPDCRQEQYRNWYPFTF) the chain is Cytoplasmic. A helical transmembrane segment spans residues 469-489 (LMSMVWISFYSYFMVWMITVI). The Extracellular segment spans residues 490–500 (GSTLAIPDTVM). Residues 501–521 (GLTFVAAGVSVPDALSSIAVI) form a helical membrane-spanning segment. An Alpha-2 repeat occupies 506-537 (AAGVSVPDALSSIAVIKEGFGDMAVSNAIGSN). At 522–535 (KEGFGDMAVSNAIG) the chain is on the cytoplasmic side. A helical transmembrane segment spans residues 536–556 (SNVFDILVCLGLPWFIQTAII). Residues 557–568 (KPGSHVNVISKG) are Extracellular-facing. The helical transmembrane segment at 569–589 (LAYSTLSLFSTVVFLILSTHL) threads the bilayer. Over 590–597 (NGWKLDKR) the chain is Cytoplasmic. A helical membrane pass occupies residues 598–618 (LGIILMVWYLFFITLASLYEL). At 619 to 633 (NVFGYMNPPECPSTY) the chain is on the extracellular side.

The protein belongs to the Ca(2+):cation antiporter (CaCA) (TC 2.A.19) family. SLC24A subfamily.

The protein resides in the membrane. Functionally, may function in the removal and maintenance of calcium homeostasis. Transports one Ca(2+) and 1 K(+) in exchange for 4 Na(+). The polypeptide is Probable sodium/potassium/calcium exchanger CG1090 (Drosophila melanogaster (Fruit fly)).